Here is a 274-residue protein sequence, read N- to C-terminus: Thiamine kinase (274 aa).

It belongs to the thiamine kinase family.

It catalyses the reaction thiamine + ATP = thiamine phosphate + ADP + H(+). It participates in cofactor biosynthesis; thiamine diphosphate biosynthesis; thiamine phosphate from thiamine: step 1/1. In terms of biological role, catalyzes the ATP-dependent phosphorylation of thiamine to thiamine phosphate. Is involved in thiamine salvage. This is Thiamine kinase from Escherichia coli (strain SMS-3-5 / SECEC).